Here is a 390-residue protein sequence, read N- to C-terminus: Enoyl-[acyl-carrier-protein] reductase [NADH], chloroplastic (390 aa).

The transit peptide at 1 to 74 (MAATAASSLQ…CKRPFSFSTR (74 aa)) directs the protein to the chloroplast. NADP(+) contacts are provided by L53 and N170. The active-site Proton donor is S239. K282 and S314 together coordinate NADP(+). Catalysis depends on K282, which acts as the Lowers pKa of active site Tyr.

Belongs to the short-chain dehydrogenases/reductases (SDR) family. FabI subfamily. As to quaternary structure, homotetramer. Expressed in flowers and siliques and at lower levels in roots and leaves (at protein level).

It localises to the plastid. Its subcellular location is the chloroplast. It catalyses the reaction a 2,3-saturated acyl-[ACP] + NAD(+) = a (2E)-enoyl-[ACP] + NADH + H(+). It functions in the pathway lipid metabolism; fatty acid biosynthesis. Inhibited by the phytotoxin cyperin and the synthetic antimicrobial compound triclosan. Functionally, catalyzes the NAD-dependent reduction of a carbon-carbon double bond in an enoyl moiety that is covalently linked to an acyl carrier protein (ACP). Catalyzes the last reduction step in the de novo synthesis cycle of fatty acids. Involved in the elongation cycle of fatty acids which are used in lipid metabolism. Required for normal plant growth. The chain is Enoyl-[acyl-carrier-protein] reductase [NADH], chloroplastic (MOD1) from Arabidopsis thaliana (Mouse-ear cress).